A 240-amino-acid chain; its full sequence is Protein FANTASTIC FOUR 2 (240 aa).

Disordered regions lie at residues 89–124 (TTPR…PPIK) and 177–229 (LLSH…KPML). The 55-residue stretch at 117-171 (NSFPPPIKFVEDSKYNRMVRWLGEDGRIVVQAIRVSSPPSCFVSERGEGRLRLIL) folds into the FAF domain. Positions 184–200 (EEEEEETEEGIDEETSE) are enriched in acidic residues. The span at 207 to 216 (GNKKFSRFSR) shows a compositional bias: basic residues. The span at 217–226 (RCKENGREPK) shows a compositional bias: basic and acidic residues.

This sequence belongs to the fantastic four family. In terms of tissue distribution, expressed in the shoot apex, stamens, carpels and young siliques. Detected in provascular and vascular tissue, and in the center of the vegetative and inflorescence meristems. Expressed in the funiculus. In roots and leaves, predominantly expressed in phloem.

Functionally, regulates the size of the shoot meristem by modulating the CLV3-WUS feedback loop. Can repress WUS but is under negative control by CLV3. This Arabidopsis thaliana (Mouse-ear cress) protein is Protein FANTASTIC FOUR 2 (FAF2).